The sequence spans 400 residues: MGTKNIGKGLTFEDILLVPNYSEVLPREVSLETKLTKNVSLKIPLISSAMDTVTEHLMAVGMARLGGIGIIHKNMDMESQVNEVLKVKNWISNLEKNESTPDQNLDKESTDGKDTKSNNNIDAYSNENLDNKGRLRVGAAIGVNEIERAKLLVEAGVDVIVLDSAHGHSLNIIRTLKEIKSKMNIDVIVGNVVTEEATKELIENGADGIKVGIGPGSICTTRIVAGVGVPQITAIEKCSSVASKFGIPIIADGGIRYSGDIGKALAVGASSVMIGSILAGTEESPGEKELIGDTVYKYYRGMGSVGAMKSGSGDRYFQEKRPENKMVPEGIEGRVKYKGEMEGVVYQLVGGLRSCMGYLGSASIEELWKKSSYVEITTSGLRESHVHDVEIVKEVMNYSK.

Residues 96–116 show a composition bias toward basic and acidic residues; that stretch reads KNESTPDQNLDKESTDGKDTK. Residues 96–125 form a disordered region; that stretch reads KNESTPDQNLDKESTDGKDTKSNNNIDAYS. Residues Asp163 and 212–214 contribute to the NAD(+) site; that span reads GIG. 2 residues coordinate K(+): Gly214 and Gly216. Ser217 is an IMP binding site. Cys219 contacts K(+). The active-site Thioimidate intermediate is Cys219. IMP-binding positions include 252-254, 275-276, and 299-303; these read DGG, GS, and YRGMG. Residue Arg315 is the Proton acceptor of the active site. Glu329 serves as a coordination point for IMP. The K(+) site is built by Glu383, Ser384, and His385.

It belongs to the IMPDH/GMPR family. In terms of assembly, homotetramer. K(+) is required as a cofactor.

It is found in the cytoplasm. The enzyme catalyses IMP + NAD(+) + H2O = XMP + NADH + H(+). Its pathway is purine metabolism; XMP biosynthesis via de novo pathway; XMP from IMP: step 1/1. Its activity is regulated as follows. Mycophenolic acid (MPA) is a non-competitive inhibitor that prevents formation of the closed enzyme conformation by binding to the same site as the amobile flap. In contrast, mizoribine monophosphate (MZP) is a competitive inhibitor that induces the closed conformation. MPA is a potent inhibitor of mammalian IMPDHs but a poor inhibitor of the bacterial enzymes. MZP is a more potent inhibitor of bacterial IMPDH. Resistant to mycophenolic acid (MPA) inhibition. Its function is as follows. Catalyzes the conversion of inosine 5'-phosphate (IMP) to xanthosine 5'-phosphate (XMP), the first committed and rate-limiting step in the de novo synthesis of guanine nucleotides, and therefore plays an important role in the regulation of cell growth. The sequence is that of Inosine-5'-monophosphate dehydrogenase from Cryptosporidium parvum.